Reading from the N-terminus, the 116-residue chain is NADH-ubiquinone oxidoreductase chain 3 (116 aa).

The next 3 helical transmembrane spans lie at 3 to 23 (LIMT…TVSF), 56 to 76 (FFLV…LLPL), and 87 to 107 (GTFF…IYEW).

It belongs to the complex I subunit 3 family.

It localises to the mitochondrion membrane. The catalysed reaction is a ubiquinone + NADH + 5 H(+)(in) = a ubiquinol + NAD(+) + 4 H(+)(out). Its function is as follows. Core subunit of the mitochondrial membrane respiratory chain NADH dehydrogenase (Complex I) that is believed to belong to the minimal assembly required for catalysis. Complex I functions in the transfer of electrons from NADH to the respiratory chain. The immediate electron acceptor for the enzyme is believed to be ubiquinone. This Cyprinus carpio (Common carp) protein is NADH-ubiquinone oxidoreductase chain 3 (MT-ND3).